We begin with the raw amino-acid sequence, 113 residues long: Cell division protein FtsB (113 aa).

Residues methionine 1–leucine 3 are Cytoplasmic-facing. The chain crosses the membrane as a helical span at residues isoleucine 4–leucine 21. Topologically, residues glycine 22–histidine 113 are periplasmic. Residues histidine 34–glycine 63 are a coiled coil. Residues lysine 93–histidine 113 form a disordered region.

The protein belongs to the FtsB family. Part of a complex composed of FtsB, FtsL and FtsQ.

The protein resides in the cell inner membrane. Its function is as follows. Essential cell division protein. May link together the upstream cell division proteins, which are predominantly cytoplasmic, with the downstream cell division proteins, which are predominantly periplasmic. The polypeptide is Cell division protein FtsB (Cupriavidus pinatubonensis (strain JMP 134 / LMG 1197) (Cupriavidus necator (strain JMP 134))).